The primary structure comprises 391 residues: Pyruvate dehydrogenase E1 component subunit beta-3, chloroplastic (391 aa).

The transit peptide at 1-35 directs the protein to the chloroplast; it reads MATAAAASLQYALHGAASASAKPRSAAPGRSVRVV. E127 provides a ligand contact to thiamine diphosphate. Residues I180, A228, I229, and N233 each coordinate K(+).

As to quaternary structure, tetramer of 2 alpha and 2 beta subunits. It depends on thiamine diphosphate as a cofactor.

It is found in the plastid. The protein resides in the chloroplast. The catalysed reaction is N(6)-[(R)-lipoyl]-L-lysyl-[protein] + pyruvate + H(+) = N(6)-[(R)-S(8)-acetyldihydrolipoyl]-L-lysyl-[protein] + CO2. Its function is as follows. The pyruvate dehydrogenase complex catalyzes the overall conversion of pyruvate to acetyl-CoA and CO(2). It contains multiple copies of three enzymatic components: pyruvate dehydrogenase (E1), dihydrolipoamide acetyltransferase (E2) and lipoamide dehydrogenase (E3). The polypeptide is Pyruvate dehydrogenase E1 component subunit beta-3, chloroplastic (Oryza sativa subsp. japonica (Rice)).